A 379-amino-acid polypeptide reads, in one-letter code: Alcohol dehydrogenase class-P (379 aa).

Ser-2 carries the post-translational modification N-acetylserine. Cys-47 lines the Zn(2+) pocket. Thr-49 contributes to the an alcohol binding site. Residue Thr-49 participates in NAD(+) binding. Residues Asp-50, His-69, Glu-70, Cys-99, Cys-102, Cys-105, Cys-113, and Cys-177 each contribute to the Zn(2+) site. An alcohol is bound at residue His-69. 2 residues coordinate NAD(+): Val-206 and Asp-226. At Ser-229 the chain carries Phosphoserine. NAD(+)-binding residues include Arg-231, Thr-272, Val-295, Val-297, Thr-320, Phe-322, and Arg-372.

This sequence belongs to the zinc-containing alcohol dehydrogenase family. Class-P subfamily. Homodimer. Requires Zn(2+) as cofactor. In terms of processing, glutathionylated. As to expression, root specific. Also detected in etiolated seedlings and leaves in cold conditions.

Its subcellular location is the cytoplasm. The catalysed reaction is a primary alcohol + NAD(+) = an aldehyde + NADH + H(+). It catalyses the reaction a secondary alcohol + NAD(+) = a ketone + NADH + H(+). The enzyme catalyses ethanol + NAD(+) = acetaldehyde + NADH + H(+). Its activity is regulated as follows. Alcohol dehydrogenase activity show inverse correlation with the decreasing availability of oxygen. Slightly repressed by thiol-modifying agents N-ethylmaleimide (NEM) and 5,5-dithio-bis-(2-nitrobenzoic acid) (DTNB), as well as by methyl methanethiosulfonate (MMTS) in a dose-dependent manner. Inhibited by hydrogen peroxide H(2)O(2). In terms of biological role, alcohol dehydrogenase catalyzing the reduction of toxic aldehydes to the corresponding alcohols. Mostly active on ethanol (EtOH), but exhibits broad substrate selectivity for primary and secondary alcohols (e.g. cinnamyl alcohol, octanol, geraniol, butanol, propyl alcohol, pentanol, isopentanol, ethylene glycol, isopropanol, methanol and tertiary butyl alcohol). Also catalyzes the reverse reaction to convert allyl alcohol to highly toxic acryl-aldehyde. Required for survival and acclimation in hypoxic conditions, especially in roots. Not able to catalyze NADH-dependent degradation of S-nitrosoglutathione (GSNO). The chain is Alcohol dehydrogenase class-P from Arabidopsis thaliana (Mouse-ear cress).